The primary structure comprises 1346 residues: Adhesion G protein-coupled receptor A3 (1346 aa).

The first 21 residues, 1 to 21, serve as a signal peptide directing secretion; the sequence is MSVLCVLLLAFVLPLRGSSSA. Positions 18–45 are disordered; it reads SSSAGSTECKTYDERSRSAGKSSPSGAT. At 22 to 739 the chain is on the extracellular side; it reads GSTECKTYDE…NVFIFRPLHP (718 aa). LRR repeat units lie at residues 66–90, 91–114, 116–138, and 139–162; these read FPNR…SFVG, LSSL…AFYG, FSLK…VFKG, and LTNL…IFDS. One can recognise an LRRCT domain in the interval 176–223; it reads LLCDCNLQWLVVWIKEKAIGVKETRCSFPRSLQGQLITTLRAETLTCD. The Ig-like domain maps to 229–327; it reads PSFQMTPSQH…GNNTRTVHIV (99 aa). A disulfide bridge links Cys251 with Cys311. 3 LRR repeats span residues 503–529, 574–600, and 611–632; these read LQRI…ALEA, TSNL…LFSS, and VYKL…GNSS. Residues 563-728 form the GAIN-B domain; the sequence is PERQLSFKCN…AVLMDLNRTG (166 aa). The interval 679 to 728 is GPS; sequence PAFWNFSLQGGQGGWQSDGCRILHQDDNFTTVSCHSLNSYAVLMDLNRTG. A disulfide bond links Cys698 and Cys712. The chain crosses the membrane as a helical span at residues 740 to 760; it reads VIYSTALVLVLCLLSVIVSYI. At 761-773 the chain is on the cytoplasmic side; that stretch reads YHHKSVRISKKCW. Residues 774–794 traverse the membrane as a helical segment; the sequence is HMLVNLCLHILLTCAVFVGGI. Residues 795–804 are Extracellular-facing; sequence NQTYNASVCQ. Residues 805–825 traverse the membrane as a helical segment; the sequence is AMGIVLHYSTLATALWSGVTA. The Cytoplasmic portion of the chain corresponds to 826-854; sequence RNIYKQVTRKAKRYEELDEPPPPPRPMLR. Residues 855-875 form a helical membrane-spanning segment; it reads FYLIGGGIPIIVCGITAAANI. The Extracellular portion of the chain corresponds to 876-897; the sequence is KNYGSQVNAPYCWMAWEPSLGA. Residues 898–918 traverse the membrane as a helical segment; sequence FYGPAAFIVFVDCMYFLSILI. Residues 919 to 977 lie on the Cytoplasmic side of the membrane; the sequence is QLRRHPERRFELKEQSEEQQHLSVTEATEITPVHLESSPTAQPVPMSALENEHTFVSQL. The helical transmembrane segment at 978 to 998 threads the bilayer; it reads MGVAGSLTLYAALWVFGALAI. Residues 999–1005 are Extracellular-facing; the sequence is SQEHPAD. Residues 1006–1026 form a helical membrane-spanning segment; the sequence is LVFACLFGALALGLGAFLVAH. The Cytoplasmic portion of the chain corresponds to 1027–1346; it reads HCVNRQDMRR…TGLWKHETTV (320 aa). A compositionally biased stretch (polar residues) spans 1157–1169; sequence SVNNNNLPGNANI. Disordered stretches follow at residues 1157–1188 and 1202–1284; these read SVNN…RASR and SVEG…DGSE. 2 stretches are compositionally biased toward basic residues: residues 1173 to 1187 and 1212 to 1226; these read PGRH…HRAS and NKRH…RNSR. Residues 1238–1252 show a composition bias toward low complexity; the sequence is QSQLQQDSSDAASTS. The segment covering 1266–1280 has biased composition (gly residues); sequence IGNGFGHGISNGGLL. The PDZ-binding signature appears at 1344-1346; that stretch reads TTV.

It belongs to the G-protein coupled receptor 2 family. Adhesion G-protein coupled receptor (ADGR) subfamily. In terms of assembly, interacts (via PDZ-binding motif) with disheveled proteins; leading to the localization of dishevelled proteins to specific membrane subdomains. In terms of tissue distribution, ubiquitously expressed at very low levels.

The protein resides in the cell membrane. In terms of biological role, orphan receptor that acts as a critical modulator of planar cell polarity during gastrulation. Controls the localization of dishevelled. The polypeptide is Adhesion G protein-coupled receptor A3 (adgra3) (Danio rerio (Zebrafish)).